Reading from the N-terminus, the 123-residue chain is Guanine nucleotide exchange factor MSS4 (123 aa).

Position 1 is an N-acetylmethionine (Met-1). The 115-residue stretch at 9 to 123 (ELVSAEGRNR…YVALERVSHE (115 aa)) folds into the MSS4 domain. Zn(2+) contacts are provided by Cys-23, Cys-26, Cys-94, and Cys-97.

This sequence belongs to the DSS4/MSS4 family. As to quaternary structure, interacts with RAB8A. As to expression, ubiquitous.

Its function is as follows. Guanine-nucleotide-releasing protein that acts on members of the SEC4/YPT1/RAB subfamily. Stimulates GDP release from both YPT1, RAB3A and RAB10, but is less active on these proteins than on the SEC4 protein. Might play a general role in vesicular transport. In Rattus norvegicus (Rat), this protein is Guanine nucleotide exchange factor MSS4 (Rabif).